The sequence spans 554 residues: Urocanate hydratase (554 aa).

NAD(+)-binding positions include 52–53, Gln-130, 176–178, Glu-196, Arg-201, 242–243, 263–267, 273–274, and Tyr-322; these read GG, GMG, NA, QTSAH, and YL. Cys-410 is an active-site residue. Residue Gly-492 participates in NAD(+) binding.

It belongs to the urocanase family. Requires NAD(+) as cofactor.

It localises to the cytoplasm. The catalysed reaction is 4-imidazolone-5-propanoate = trans-urocanate + H2O. It functions in the pathway amino-acid degradation; L-histidine degradation into L-glutamate; N-formimidoyl-L-glutamate from L-histidine: step 2/3. Functionally, catalyzes the conversion of urocanate to 4-imidazolone-5-propionate. The sequence is that of Urocanate hydratase from Shewanella halifaxensis (strain HAW-EB4).